The sequence spans 414 residues: Esterase FrsA (414 aa).

The protein belongs to the FrsA family.

It carries out the reaction a carboxylic ester + H2O = an alcohol + a carboxylate + H(+). In terms of biological role, catalyzes the hydrolysis of esters. In Escherichia coli O17:K52:H18 (strain UMN026 / ExPEC), this protein is Esterase FrsA.